Here is a 144-residue protein sequence, read N- to C-terminus: uncharacterized protein (144 aa).

The helical transmembrane segment at 72–90 (VAIGTSLIVGAGVAMEVSV) threads the bilayer.

This sequence to yeast YCL21w.

It is found in the membrane. This is an uncharacterized protein from Saccharomyces cerevisiae (strain ATCC 204508 / S288c) (Baker's yeast).